The primary structure comprises 246 residues: MKTNIFFIFLISILNQIYALFNNSYYSNLEQECIKNILNCTQSKTLSLLEPIDQAPIPKSDIISRLLYHTPYISRRDQVLIDEDFLETFYLLYNNPNQLHTLLSLIKDSESGHNWLGFLNNFERCLSDNTLLTCRDNVCKSYSYEKLKFTGNIFVENIIGFEFNIPSNMINFNMSILIYLENEETRTQRIVRIDHHGINVFDALLNCLRYFSRYYNFSFPLIQEMEKYNEVLPFRSEFSNLLIRTY.

The signal sequence occupies residues 1–19; it reads MKTNIFFIFLISILNQIYA. The gL betaherpesvirus-type domain occupies 29-235; that stretch reads LEQECIKNIL…EKYNEVLPFR (207 aa). An intrachain disulfide couples Cys134 to Cys139.

This sequence belongs to the herpesviridae glycoprotein L (gL) family. Betaherpesvirinae gL subfamily. Interacts with glycoprotein H (gH); this interaction is necessary for the correct processing and cell surface expression of gH.

The protein resides in the virion membrane. It is found in the host cell membrane. Its subcellular location is the host Golgi apparatus. The protein localises to the host trans-Golgi network. Functionally, the heterodimer glycoprotein H-glycoprotein L is required for the fusion of viral and plasma membranes leading to virus entry into the host cell. Acts as a functional inhibitor of gH and maintains gH in an inhibited form. Upon binding to host integrins, gL dissociates from gH leading to activation of the viral fusion glycoproteins gB and gH. The sequence is that of Envelope glycoprotein L from Homo sapiens (Human).